Consider the following 1467-residue polypeptide: Helicase ARIP4 (1467 aa).

Disordered regions lie at residues 1-150 (MSDE…YAAP) and 186-234 (DSSS…GGTH). The segment covering 11-49 (PDLDPDVELEDAEEEEEEEEVAVEECDRDDEEDLLDDPS) has biased composition (acidic residues). The segment covering 72–82 (TSTTSSQSEPS) has biased composition (low complexity). Basic residues predominate over residues 100–115 (KKRAQKPSHMRRNIRK). Residues lysine 115 and lysine 127 each participate in a glycyl lysine isopeptide (Lys-Gly) (interchain with G-Cter in SUMO2) cross-link. 2 stretches are compositionally biased toward basic and acidic residues: residues 133-147 (ELER…RKDY) and 192-201 (EDEKSSRDEV). Residue lysine 272 forms a Glycyl lysine isopeptide (Lys-Gly) (interchain with G-Cter in SUMO2) linkage. Residues 292 to 512 (RFKTSSGFGC…WCMVDFVRPD (221 aa)) form the Helicase ATP-binding domain. ATP is bound at residue 305 to 312 (HSMGLGKT). Residues 463–466 (DEGH) carry the DEAH box motif. Positions 551–555 (LHSLL) match the LXXLL motif 1 motif. A disordered region spans residues 649 to 673 (GSAGTSARCPPQGTKGKGEDSTLAS). Glycyl lysine isopeptide (Lys-Gly) (interchain with G-Cter in SUMO2) cross-links involve residues lysine 665, lysine 682, lysine 759, lysine 901, lysine 1014, and lysine 1018. The region spanning 728-896 (HLIEESVKLG…RVVDDLNPML (169 aa)) is the Helicase C-terminal domain. The tract at residues 1120–1171 (RATGKPKVPEDGRMAASGSQGPSCESTSNGRHSASSPKAPDPEGLARPVSPD) is disordered. The segment covering 1136–1155 (SGSQGPSCESTSNGRHSASS) has biased composition (polar residues). Residues serine 1169 and serine 1172 each carry the phosphoserine modification. Disordered stretches follow at residues 1184–1221 (DVAA…TALG) and 1247–1284 (PVLD…VQPY). Threonine 1260 carries the phosphothreonine modification. The short motif at 1329–1333 (LSNLL) is the LXXLL motif 2 element. The interval 1445-1467 (AEVGFSSNDDEDKDDDVIEVTGK) is disordered. The span at 1452 to 1467 (NDDEDKDDDVIEVTGK) shows a compositional bias: acidic residues.

The protein belongs to the SNF2/RAD54 helicase family. Interacts with AR via its N-terminus. Interacts with DYRK1A. Binds DNA and mononucleosomes, but does not seem to form large multiprotein complexes. In terms of processing, sumoylated.

The protein localises to the nucleus. It catalyses the reaction ATP + H2O = ADP + phosphate + H(+). With respect to regulation, enzyme activity is enhanced by dsDNA (double-stranded DNA) and ssDNA (single-stranded DNA). Functionally, DNA helicase that modulates androgen receptor (AR)-dependent transactivation in a promoter-dependent manner. Not able to remodel mononucleosomes in vitro. This chain is Helicase ARIP4 (RAD54L2), found in Homo sapiens (Human).